An 847-amino-acid polypeptide reads, in one-letter code: A-kinase anchor protein 4 (847 aa).

Positions 1-187 (MIAYCGTTKM…MAASKNTNNN (187 aa)) are excised as a propeptide. Residues Ser95, Ser129, Ser189, and Ser203 each carry the phosphoserine modification. A compositionally biased stretch (polar residues) spans 182-204 (KNTNNNQSPSNPATKSPSNQRSV). The tract at residues 182 to 209 (KNTNNNQSPSNPATKSPSNQRSVATPDG) is disordered. The residue at position 206 (Thr206) is a Phosphothreonine. Residues Ser212, Ser225, and Ser270 each carry the phosphoserine modification. Residues 218-231 (YYVNRLSSLVIQMA) form an interaction with Prkar1a and Prkar2a region. At Tyr300 the chain carries Phosphotyrosine. Phosphoserine occurs at positions 301, 304, 340, 430, 441, 443, 462, 491, 496, and 503. Residues 334-343 (YANQVASDMM) are PKA-RI subunit binding domain. Thr505 is subject to Phosphothreonine. The tract at residues 511-536 (KQGTQGRVPNKVCPSKDEKREKISPS) is disordered. A compositionally biased stretch (basic and acidic residues) spans 524-533 (PSKDEKREKI). 2 positions are modified to phosphoserine: Ser536 and Ser581. Residues 583-613 (QYEKSGGGQSSKSLSMKHFESRGAPGPSTCA) are disordered. Phosphoserine occurs at positions 626, 631, 648, 650, 674, 677, 700, and 729. The disordered stretch occupies residues 655–677 (CCDSRSKQAAPVAKRPEDQSQDS).

This sequence belongs to the AKAP110 family. Interacts with PRKAR1A and PRKAR2A. Interacts with ENO4. Interacts with QRICH2. Phosphorylated by STK33 during sperm flagella assembly. Expressed in flagella of epididymal sperm.

Its subcellular location is the cell projection. The protein localises to the cilium. It is found in the flagellum. Major structural component of sperm fibrous sheath. May play a role in sperm motility. The protein is A-kinase anchor protein 4 of Rattus norvegicus (Rat).